The sequence spans 503 residues: MEFSVKSGSPEKQRSACIVVGVFEPRRLSPIAEQLDKISDGYISALLRRGELEGKPGQTLLLHHVPNVLSERILLIGCGKERELDERQYKQVIQKTINTLNDTGSMEAVCFLTELHVKGRNNYWKVRQAVETAKETLYSFDQLKTNKSEPRRPLRKMVFNVPTRRELTSGERAILHGLAIAAGIKAAKDLGNMPPNICNAAYLASQARQLADSYSKNVITRVIGEQQMKELGMHSYLAVGQGSQNESLMSVIEYKGNASEDARPIVLVGKGLTFDSGGISIKPSEGMDEMKYDMCGAAAVYGVMRMVAELQLPINVIGVLAGCENMPGGRAYRPGDVLTTMSGQTVEVLNTDAEGRLVLCDVLTYVERFEPEAVIDVATLTGACVIALGHHITGLMANHNPLAHELIAASEQSGDRAWRLPLGDEYQEQLESNFADMANIGGRPGGAITAGCFLSRFTRKYNWAHLDIAGTAWRSGKAKGATGRPVALLAQFLLNRAGFNGEE.

Residues Lys-270 and Asp-275 each contribute to the Mn(2+) site. Residue Lys-282 is part of the active site. Asp-293, Asp-352, and Glu-354 together coordinate Mn(2+). Arg-356 is an active-site residue.

This sequence belongs to the peptidase M17 family. Requires Mn(2+) as cofactor.

It localises to the cytoplasm. The catalysed reaction is Release of an N-terminal amino acid, Xaa-|-Yaa-, in which Xaa is preferably Leu, but may be other amino acids including Pro although not Arg or Lys, and Yaa may be Pro. Amino acid amides and methyl esters are also readily hydrolyzed, but rates on arylamides are exceedingly low.. It catalyses the reaction Release of an N-terminal amino acid, preferentially leucine, but not glutamic or aspartic acids.. In terms of biological role, presumably involved in the processing and regular turnover of intracellular proteins. Catalyzes the removal of unsubstituted N-terminal amino acids from various peptides. The protein is Probable cytosol aminopeptidase of Shigella boydii serotype 4 (strain Sb227).